Reading from the N-terminus, the 192-residue chain is Probable apo-citrate lyase phosphoribosyl-dephospho-CoA transferase (192 aa).

Belongs to the CitX family.

The catalysed reaction is apo-[citrate lyase ACP] + 2'-(5''-triphospho-alpha-D-ribosyl)-3'-dephospho-CoA = holo-[citrate lyase ACP] + diphosphate. In terms of biological role, transfers 2-(5''-triphosphoribosyl)-3'-dephosphocoenzyme-A on a serine residue to the apo-acyl carrier protein (gamma chain) of the citrate lyase to yield holo-acyl carrier protein. This chain is Probable apo-citrate lyase phosphoribosyl-dephospho-CoA transferase, found in Streptococcus pyogenes serotype M3 (strain ATCC BAA-595 / MGAS315).